Consider the following 418-residue polypeptide: ATP-dependent RNA helicase RhlB (418 aa).

The Q motif motif lies at 9-37 (TKFADLPLEKSLISGLTSQGYEYCTPIQA). The Helicase ATP-binding domain occupies 40 to 219 (LPITLTGKDI…FEHMNDPESI (180 aa)). Position 53–60 (53–60 (AQTGTGKT)) interacts with ATP. Positions 165–168 (DEAD) match the DEAD box motif. The region spanning 243 to 390 (KILLLLSLIE…CSEYDKNAML (148 aa)) is the Helicase C-terminal domain.

The protein belongs to the DEAD box helicase family. RhlB subfamily. In terms of assembly, component of the RNA degradosome, which is a multiprotein complex involved in RNA processing and mRNA degradation.

Its subcellular location is the cytoplasm. It catalyses the reaction ATP + H2O = ADP + phosphate + H(+). In terms of biological role, DEAD-box RNA helicase involved in RNA degradation. Has RNA-dependent ATPase activity and unwinds double-stranded RNA. The chain is ATP-dependent RNA helicase RhlB from Psychromonas ingrahamii (strain DSM 17664 / CCUG 51855 / 37).